A 344-amino-acid chain; its full sequence is Phosphate acyltransferase (344 aa).

Belongs to the PlsX family. As to quaternary structure, homodimer. Probably interacts with PlsY.

It localises to the cytoplasm. It carries out the reaction a fatty acyl-[ACP] + phosphate = an acyl phosphate + holo-[ACP]. It functions in the pathway lipid metabolism; phospholipid metabolism. Catalyzes the reversible formation of acyl-phosphate (acyl-PO(4)) from acyl-[acyl-carrier-protein] (acyl-ACP). This enzyme utilizes acyl-ACP as fatty acyl donor, but not acyl-CoA. The chain is Phosphate acyltransferase from Yersinia pestis bv. Antiqua (strain Antiqua).